A 544-amino-acid chain; its full sequence is Putative cysteine ligase BshC (544 aa).

Residues 431-463 (LNDTCRTIKEEHEKFIQELSRLDEKIYDFEEKN) adopt a coiled-coil conformation.

The protein belongs to the BshC family.

In terms of biological role, involved in bacillithiol (BSH) biosynthesis. May catalyze the last step of the pathway, the addition of cysteine to glucosamine malate (GlcN-Mal) to generate BSH. This chain is Putative cysteine ligase BshC, found in Natranaerobius thermophilus (strain ATCC BAA-1301 / DSM 18059 / JW/NM-WN-LF).